We begin with the raw amino-acid sequence, 434 residues long: Enolase (434 aa).

Phosphoenolpyruvate is bound at residue Ala41. (2R)-2-phosphoglycerate is bound at residue Gln165. The Proton donor role is filled by Glu207. The Mg(2+) site is built by Asp244, Glu291, and Asp318. Residues Lys343, Arg372, Ser373, and Lys394 each contribute to the phosphoenolpyruvate site. Residues Lys343, Arg372, Ser373, and Lys394 each contribute to the (2R)-2-phosphoglycerate site. Lys343 (proton acceptor) is an active-site residue.

This sequence belongs to the enolase family. In terms of assembly, homodimer and homooctamer; the homodimer is inactive. Mg(2+) serves as cofactor.

The protein resides in the cytoplasm. The protein localises to the secreted. It is found in the cell surface. It catalyses the reaction (2R)-2-phosphoglycerate = phosphoenolpyruvate + H2O. Its pathway is carbohydrate degradation; glycolysis; pyruvate from D-glyceraldehyde 3-phosphate: step 4/5. Functionally, catalyzes the reversible conversion of 2-phosphoglycerate (2-PG) into phosphoenolpyruvate (PEP). It is essential for the degradation of carbohydrates via glycolysis. Its function is as follows. 'Moonlights' as a laminin receptor. Binds laminin when expressed on the bacterial cell surface; this probably induces destruction of the extracellular matrix, favoring invasion and dissemination. This chain is Enolase, found in Staphylococcus aureus.